The following is a 232-amino-acid chain: Ubiquinone biosynthesis O-methyltransferase (232 aa).

Positions 36, 55, 76, and 120 each coordinate S-adenosyl-L-methionine.

It belongs to the methyltransferase superfamily. UbiG/COQ3 family.

It carries out the reaction a 3-demethylubiquinol + S-adenosyl-L-methionine = a ubiquinol + S-adenosyl-L-homocysteine + H(+). The enzyme catalyses a 3-(all-trans-polyprenyl)benzene-1,2-diol + S-adenosyl-L-methionine = a 2-methoxy-6-(all-trans-polyprenyl)phenol + S-adenosyl-L-homocysteine + H(+). It functions in the pathway cofactor biosynthesis; ubiquinone biosynthesis. O-methyltransferase that catalyzes the 2 O-methylation steps in the ubiquinone biosynthetic pathway. This is Ubiquinone biosynthesis O-methyltransferase from Paraburkholderia phytofirmans (strain DSM 17436 / LMG 22146 / PsJN) (Burkholderia phytofirmans).